The primary structure comprises 404 residues: Serine palmitoyltransferase (404 aa).

Residues G112–Y113, S185, H213, and T241 each bind pyridoxal 5'-phosphate. Position 244 is an N6-(pyridoxal phosphate)lysine (K244).

The protein belongs to the class-II pyridoxal-phosphate-dependent aminotransferase family. The cofactor is pyridoxal 5'-phosphate.

It localises to the cytoplasm. It catalyses the reaction L-serine + hexadecanoyl-CoA + H(+) = 3-oxosphinganine + CO2 + CoA. The protein operates within lipid metabolism; sphingolipid metabolism. Involved in de novo bacterial ceramide synthesis. Catalyzes the condensation of L-serine with palmitoyl-CoA (hexadecanoyl-CoA) to produce 3-oxosphinganine. Can also condense serine and C16:1-CoA, but shows a preference for palmitoyl-CoA. The protein is Serine palmitoyltransferase of Caulobacter vibrioides (strain NA1000 / CB15N) (Caulobacter crescentus).